Consider the following 152-residue polypeptide: Ribosomal RNA large subunit methyltransferase H (152 aa).

S-adenosyl-L-methionine is bound by residues Leu71, Gly101, and 120 to 125; that span reads LSKLTF.

Belongs to the RNA methyltransferase RlmH family. In terms of assembly, homodimer.

It is found in the cytoplasm. The enzyme catalyses pseudouridine(1915) in 23S rRNA + S-adenosyl-L-methionine = N(3)-methylpseudouridine(1915) in 23S rRNA + S-adenosyl-L-homocysteine + H(+). In terms of biological role, specifically methylates the pseudouridine at position 1915 (m3Psi1915) in 23S rRNA. The sequence is that of Ribosomal RNA large subunit methyltransferase H from Thermosipho melanesiensis (strain DSM 12029 / CIP 104789 / BI429).